We begin with the raw amino-acid sequence, 213 residues long: Small ribosomal subunit protein uS5 (213 aa).

The disordered stretch occupies residues 1 to 42; that stretch reads MSERDRNGGRSADNNRNDRNERGGRNDRGGRNDRRNNQQDER. Residues 45–108 enclose the S5 DRBM domain; the sequence is YIERVVTINR…EEARKNFFRV (64 aa).

Belongs to the universal ribosomal protein uS5 family. As to quaternary structure, part of the 30S ribosomal subunit. Contacts proteins S4 and S8.

Functionally, with S4 and S12 plays an important role in translational accuracy. In terms of biological role, located at the back of the 30S subunit body where it stabilizes the conformation of the head with respect to the body. The chain is Small ribosomal subunit protein uS5 from Corynebacterium urealyticum (strain ATCC 43042 / DSM 7109).